A 149-amino-acid chain; its full sequence is L-alanine exporter AlaE (149 aa).

4 consecutive transmembrane segments (helical) span residues 16 to 36 (FAMV…LSGM), 46 to 66 (LVAI…RDLF), 85 to 105 (ILAY…VVGA), and 112 to 132 (AAVS…GYFL).

This sequence belongs to the AlaE exporter family.

It is found in the cell inner membrane. Its function is as follows. Exports L-alanine. The sequence is that of L-alanine exporter AlaE from Shigella flexneri.